Reading from the N-terminus, the 81-residue chain is ATP synthase subunit C, cyanelle (81 aa).

A run of 2 helical transmembrane segments spans residues 7–27 (AASVIAAALAVGLAAIGPGIG) and 57–77 (LAFMEALTIYGLVVALALLFA).

Belongs to the ATPase C chain family. As to quaternary structure, F-type ATPases have 2 components, F(1) - the catalytic core - and F(0) - the membrane proton channel. F(1) has five subunits: alpha(3), beta(3), gamma(1), delta(1), epsilon(1). F(0) has four main subunits: a(1), b(1), b'(1) and c(10-14). The alpha and beta chains form an alternating ring which encloses part of the gamma chain. F(1) is attached to F(0) by a central stalk formed by the gamma and epsilon chains, while a peripheral stalk is formed by the delta, b and b' chains.

Its subcellular location is the plastid. It is found in the cyanelle thylakoid membrane. In terms of biological role, f(1)F(0) ATP synthase produces ATP from ADP in the presence of a proton or sodium gradient. F-type ATPases consist of two structural domains, F(1) containing the extramembraneous catalytic core and F(0) containing the membrane proton channel, linked together by a central stalk and a peripheral stalk. During catalysis, ATP synthesis in the catalytic domain of F(1) is coupled via a rotary mechanism of the central stalk subunits to proton translocation. Key component of the F(0) channel; it plays a direct role in translocation across the membrane. A homomeric c-ring of between 10-14 subunits forms the central stalk rotor element with the F(1) delta and epsilon subunits. This chain is ATP synthase subunit C, cyanelle, found in Cyanophora paradoxa.